The primary structure comprises 71 residues: Mitotic-spindle organizing protein 1B (71 aa).

Belongs to the MOZART1 family. In terms of assembly, homo- and heteromultimer. Part of the gamma-tubulin complex. Interacts with TUBB2/TUBB3, GIP2, GCP3 and TSA1 (via C-terminal domain). As to expression, mostly expressed in siliques and flowers, and, to a lower extent, in leaves, roots and seedlings, with highest levels in young tissues and meristematic cells, and the vasculature.

It is found in the cytoplasm. The protein localises to the cytoskeleton. The protein resides in the microtubule organizing center. Its subcellular location is the spindle. It localises to the nucleus. It is found in the phragmoplast. The protein localises to the nucleus envelope. Its function is as follows. Required for gamma-tubulin complex recruitment to the microtubule organizing centers (MTOCs). During mitosis, modulates gamma-tubulin complex localization, spindle stability and chromosomal segregation. Necessary for gametophyte development and embryogenesis. In Arabidopsis thaliana (Mouse-ear cress), this protein is Mitotic-spindle organizing protein 1B (GIP1).